We begin with the raw amino-acid sequence, 259 residues long: 7-cyano-7-deazaguanine synthase (259 aa).

32-42 (LSGGLDSVTCL) is a binding site for ATP. The Zn(2+) site is built by Cys-223, Cys-233, Cys-236, and Cys-239.

This sequence belongs to the QueC family. Requires Zn(2+) as cofactor.

It catalyses the reaction 7-carboxy-7-deazaguanine + NH4(+) + ATP = 7-cyano-7-deazaguanine + ADP + phosphate + H2O + H(+). Its pathway is purine metabolism; 7-cyano-7-deazaguanine biosynthesis. Its function is as follows. Catalyzes the ATP-dependent conversion of 7-carboxy-7-deazaguanine (CDG) to 7-cyano-7-deazaguanine (preQ(0)). The protein is 7-cyano-7-deazaguanine synthase of Psychrobacter arcticus (strain DSM 17307 / VKM B-2377 / 273-4).